A 221-amino-acid chain; its full sequence is Protein GrpE (221 aa).

The interval 1–43 is disordered; it reads MFTNPFGRKKDMSDDQKKNNQPDTEADNAENIKFAADDTELRA. The span at 8–20 shows a compositional bias: basic and acidic residues; that stretch reads RKKDMSDDQKKNN.

Belongs to the GrpE family. Homodimer.

Its subcellular location is the cytoplasm. Functionally, participates actively in the response to hyperosmotic and heat shock by preventing the aggregation of stress-denatured proteins, in association with DnaK and GrpE. It is the nucleotide exchange factor for DnaK and may function as a thermosensor. Unfolded proteins bind initially to DnaJ; upon interaction with the DnaJ-bound protein, DnaK hydrolyzes its bound ATP, resulting in the formation of a stable complex. GrpE releases ADP from DnaK; ATP binding to DnaK triggers the release of the substrate protein, thus completing the reaction cycle. Several rounds of ATP-dependent interactions between DnaJ, DnaK and GrpE are required for fully efficient folding. The chain is Protein GrpE from Deinococcus radiodurans (strain ATCC 13939 / DSM 20539 / JCM 16871 / CCUG 27074 / LMG 4051 / NBRC 15346 / NCIMB 9279 / VKM B-1422 / R1).